We begin with the raw amino-acid sequence, 837 residues long: Translation initiation factor IF-2 (837 aa).

Residues 94 to 252 form a disordered region; the sequence is QRSPEEIEAE…NAHGFQSPTG (159 aa). Residues 96-136 are compositionally biased toward basic and acidic residues; sequence SPEEIEAERKRELDERRAVENAARQKAEEEARVRAEEEARR. Residues 137 to 171 are compositionally biased toward low complexity; the sequence is QPAAPSAPAEAVAAPAPVAEPVREAAPVVAAAPAA. Composition is skewed to basic and acidic residues over residues 172-213 and 221-230; these read DTRK…EKAP and TTDEESDGFR. Residues 231–244 show a composition bias toward basic residues; that stretch reads RGGRGKAKLKKRNA. The 170-residue stretch at 337 to 506 folds into the tr-type G domain; the sequence is PRAPVVTVMG…LLQAEVLELT (170 aa). The segment at 346–353 is G1; that stretch reads GHVDHGKT. 346–353 provides a ligand contact to GTP; that stretch reads GHVDHGKT. The tract at residues 371 to 375 is G2; sequence GITQH. Positions 392 to 395 are G3; sequence DTPG. GTP is bound by residues 392-396 and 446-449; these read DTPGH and NKID. A G4 region spans residues 446 to 449; sequence NKID. The tract at residues 482 to 484 is G5; the sequence is SAK.

This sequence belongs to the TRAFAC class translation factor GTPase superfamily. Classic translation factor GTPase family. IF-2 subfamily.

It localises to the cytoplasm. Functionally, one of the essential components for the initiation of protein synthesis. Protects formylmethionyl-tRNA from spontaneous hydrolysis and promotes its binding to the 30S ribosomal subunits. Also involved in the hydrolysis of GTP during the formation of the 70S ribosomal complex. This chain is Translation initiation factor IF-2, found in Pseudomonas fluorescens (strain Pf0-1).